The sequence spans 375 residues: Erythronate-4-phosphate dehydrogenase (375 aa).

2 residues coordinate substrate: S45 and T66. Residues D146, T175, 206–208 (ASR), and D232 each bind NAD(+). R208 is a catalytic residue. E237 is a catalytic residue. The active-site Proton donor is the H254. G257 is an NAD(+) binding site. Position 258 (Y258) interacts with substrate.

Belongs to the D-isomer specific 2-hydroxyacid dehydrogenase family. PdxB subfamily. As to quaternary structure, homodimer.

It localises to the cytoplasm. It carries out the reaction 4-phospho-D-erythronate + NAD(+) = (R)-3-hydroxy-2-oxo-4-phosphooxybutanoate + NADH + H(+). Its pathway is cofactor biosynthesis; pyridoxine 5'-phosphate biosynthesis; pyridoxine 5'-phosphate from D-erythrose 4-phosphate: step 2/5. Functionally, catalyzes the oxidation of erythronate-4-phosphate to 3-hydroxy-2-oxo-4-phosphonooxybutanoate. This chain is Erythronate-4-phosphate dehydrogenase, found in Proteus mirabilis (strain HI4320).